A 338-amino-acid polypeptide reads, in one-letter code: Ketol-acid reductoisomerase (NADP(+)) (338 aa).

Positions 1–181 (MKVFYDKDCD…GGGKAGIIET (181 aa)) constitute a KARI N-terminal Rossmann domain. NADP(+) contacts are provided by residues 24–27 (YGSQ), Arg47, and Ser52. Residue His107 is part of the active site. Gly133 is an NADP(+) binding site. Positions 182-327 (TFREETETDL…EKLRAMMPWI (146 aa)) constitute a KARI C-terminal knotted domain. Positions 190, 194, 226, and 230 each coordinate Mg(2+). Ser251 contacts substrate.

This sequence belongs to the ketol-acid reductoisomerase family. Mg(2+) is required as a cofactor.

The enzyme catalyses (2R)-2,3-dihydroxy-3-methylbutanoate + NADP(+) = (2S)-2-acetolactate + NADPH + H(+). The catalysed reaction is (2R,3R)-2,3-dihydroxy-3-methylpentanoate + NADP(+) = (S)-2-ethyl-2-hydroxy-3-oxobutanoate + NADPH + H(+). It participates in amino-acid biosynthesis; L-isoleucine biosynthesis; L-isoleucine from 2-oxobutanoate: step 2/4. It functions in the pathway amino-acid biosynthesis; L-valine biosynthesis; L-valine from pyruvate: step 2/4. Functionally, involved in the biosynthesis of branched-chain amino acids (BCAA). Catalyzes an alkyl-migration followed by a ketol-acid reduction of (S)-2-acetolactate (S2AL) to yield (R)-2,3-dihydroxy-isovalerate. In the isomerase reaction, S2AL is rearranged via a Mg-dependent methyl migration to produce 3-hydroxy-3-methyl-2-ketobutyrate (HMKB). In the reductase reaction, this 2-ketoacid undergoes a metal-dependent reduction by NADPH to yield (R)-2,3-dihydroxy-isovalerate. The protein is Ketol-acid reductoisomerase (NADP(+)) of Albidiferax ferrireducens (strain ATCC BAA-621 / DSM 15236 / T118) (Rhodoferax ferrireducens).